A 254-amino-acid chain; its full sequence is Alcohol dehydrogenase (254 aa).

10–33 (FVAGLGGIGLDTSRELVKRDLKNL) is an NAD(+) binding site. Residue serine 138 coordinates substrate. Residue tyrosine 151 is the Proton acceptor of the active site.

Belongs to the short-chain dehydrogenases/reductases (SDR) family. In terms of assembly, homodimer.

The enzyme catalyses a primary alcohol + NAD(+) = an aldehyde + NADH + H(+). It catalyses the reaction a secondary alcohol + NAD(+) = a ketone + NADH + H(+). This Drosophila guanche (Fruit fly) protein is Alcohol dehydrogenase (Adh).